Consider the following 347-residue polypeptide: Eukaryotic translation initiation factor 3 subunit I (347 aa).

5 WD repeats span residues 8–47 (GHERPLTQVKYNKEGDLLFSCSKDSSASVWYSLNGERLGT), 50–89 (GHTGTIWSIDVDCFTKYCVTGSADYSIKLWDVSNGQCVAT), 149–190 (THEG…EYVD), 194–233 (LHEKSISDMQFSPDLTYFITSSRDTNSFLVDVSTLQVLKK), and 291–330 (GHFGPLNTVAISPQGTSYASGGEDGFIRLHHFEKSYFDFK). S302 carries the phosphoserine modification.

It belongs to the eIF-3 subunit I family. As to quaternary structure, component of the eukaryotic translation initiation factor 3 (eIF-3) complex.

The protein localises to the cytoplasm. Component of the eukaryotic translation initiation factor 3 (eIF-3) complex, which is involved in protein synthesis of a specialized repertoire of mRNAs and, together with other initiation factors, stimulates binding of mRNA and methionyl-tRNAi to the 40S ribosome. The eIF-3 complex specifically targets and initiates translation of a subset of mRNAs involved in cell proliferation. The polypeptide is Eukaryotic translation initiation factor 3 subunit I (Saccharomyces cerevisiae (strain YJM789) (Baker's yeast)).